Reading from the N-terminus, the 195-residue chain is CASP-like protein 1B1 (195 aa).

Topologically, residues 1–22 (MGLQNEEKLELGCTGLQPKPKK) are cytoplasmic. A helical transmembrane segment spans residues 23–43 (WVLLMVRVVAFLATAAATLVM). Residues 44 to 75 (ALNKETKTLVVATVGNTPIKVTLTAKFQHTPA) lie on the Extracellular side of the membrane. A helical transmembrane segment spans residues 76 to 96 (FVFFVIANGMASFHNLLMIMV). Over 97 to 109 (ELCGQKLDYKGMR) the chain is Cytoplasmic. Residues 110–130 (LAMVAILDMMTVALVSGGASA) traverse the membrane as a helical segment. Topologically, residues 131–163 (ATFMAELGKNGNSHARWDKICDKFETFCDHGGA) are extracellular. A helical transmembrane segment spans residues 164-184 (ALIASSAGLILMMIISVMSIM). Residues 185 to 195 (KLLIKPKSDSS) lie on the Cytoplasmic side of the membrane.

Belongs to the Casparian strip membrane proteins (CASP) family. In terms of assembly, homodimer and heterodimers.

Its subcellular location is the cell membrane. In Populus trichocarpa (Western balsam poplar), this protein is CASP-like protein 1B1.